We begin with the raw amino-acid sequence, 256 residues long: 1-(5-phosphoribosyl)-5-[(5-phosphoribosylamino)methylideneamino] imidazole-4-carboxamide isomerase (256 aa).

Asp8 (proton acceptor) is an active-site residue. Catalysis depends on Asp130, which acts as the Proton donor.

It belongs to the HisA/HisF family.

The protein resides in the cytoplasm. The catalysed reaction is 1-(5-phospho-beta-D-ribosyl)-5-[(5-phospho-beta-D-ribosylamino)methylideneamino]imidazole-4-carboxamide = 5-[(5-phospho-1-deoxy-D-ribulos-1-ylimino)methylamino]-1-(5-phospho-beta-D-ribosyl)imidazole-4-carboxamide. It participates in amino-acid biosynthesis; L-histidine biosynthesis; L-histidine from 5-phospho-alpha-D-ribose 1-diphosphate: step 4/9. This Chlorobium phaeobacteroides (strain DSM 266 / SMG 266 / 2430) protein is 1-(5-phosphoribosyl)-5-[(5-phosphoribosylamino)methylideneamino] imidazole-4-carboxamide isomerase.